The sequence spans 251 residues: MRTPIIAGNWKMNMNPEQTAEFVKAVKDNLPAASEVEAVIAAPAVDLPALLENAKGSDLKVAAENCYFEDEGAFTGETSPKVLKEMGVDYVVIGHSERRDYFHETDEDINKKAHAIFRNGLTPIICCGESLETREAGKAEEWVANQVTAALKDLSAEQVASLVIAYEPIWAIGTGKTATADQAEEICAVVRKTVADLYDETVADKVRVQYGGSVKPANVKELMAKENIDGGLVGGASLVPDSYLQLVNYKN.

9–11 (NWK) serves as a coordination point for substrate. Histidine 95 serves as the catalytic Electrophile. Glutamate 167 serves as the catalytic Proton acceptor. Residues glycine 173, serine 213, and 234–235 (GG) each bind substrate.

It belongs to the triosephosphate isomerase family. As to quaternary structure, homodimer.

Its subcellular location is the cytoplasm. It carries out the reaction D-glyceraldehyde 3-phosphate = dihydroxyacetone phosphate. Its pathway is carbohydrate biosynthesis; gluconeogenesis. The protein operates within carbohydrate degradation; glycolysis; D-glyceraldehyde 3-phosphate from glycerone phosphate: step 1/1. Its function is as follows. Involved in the gluconeogenesis. Catalyzes stereospecifically the conversion of dihydroxyacetone phosphate (DHAP) to D-glyceraldehyde-3-phosphate (G3P). This chain is Triosephosphate isomerase, found in Ligilactobacillus salivarius (strain UCC118) (Lactobacillus salivarius).